Consider the following 356-residue polypeptide: DNA polymerase IV (356 aa).

The UmuC domain maps to 6-187; it reads IIHIDMDYFF…LDIGDFPGVG (182 aa). Residues Asp-10 and Asp-105 each coordinate Mg(2+). Residue Glu-106 is part of the active site.

It belongs to the DNA polymerase type-Y family. In terms of assembly, monomer. Requires Mg(2+) as cofactor.

Its subcellular location is the cytoplasm. The catalysed reaction is DNA(n) + a 2'-deoxyribonucleoside 5'-triphosphate = DNA(n+1) + diphosphate. In terms of biological role, poorly processive, error-prone DNA polymerase involved in untargeted mutagenesis. Copies undamaged DNA at stalled replication forks, which arise in vivo from mismatched or misaligned primer ends. These misaligned primers can be extended by PolIV. Exhibits no 3'-5' exonuclease (proofreading) activity. May be involved in translesional synthesis, in conjunction with the beta clamp from PolIII. This Staphylococcus aureus (strain JH1) protein is DNA polymerase IV.